A 237-amino-acid polypeptide reads, in one-letter code: Mitochondrial carrier-like protein L276 (237 aa).

Solcar repeat units follow at residues 1–83 (MAKY…FENK), 85–161 (YPYT…LNEY), and 164–233 (KPVV…LNKK). 5 helical membrane passes run 11-27 (AIATIVAEIITLPICTF), 60-76 (VPAIMSQTYSTSSKYFL), 91-108 (MINGIISGIMTSLITHPI), 140-160 (SFGKTVISSSMFFPLYETLNE), and 166-183 (VVSSMLTAIISTTIMQPL). The Substrate recognition motif lies at 191–196 (IYGLSL). A helical membrane pass occupies residues 205–226 (YYRGLSLNLMRIVPHFVITMTT).

This sequence belongs to the mitochondrial carrier (TC 2.A.29) family.

The protein localises to the host mitochondrion inner membrane. In terms of biological role, transports dATP and to a lesser extent dTTP, TTP, UTP and ADP, possibly across the mitochondrial inner membrane. This chain is Mitochondrial carrier-like protein L276, found in Acanthamoeba polyphaga (Amoeba).